Reading from the N-terminus, the 360-residue chain is Protein Wnt-2 (360 aa).

An N-terminal signal peptide occupies residues Met-1 to Ser-26. Intrachain disulfides connect Cys-76-Cys-87, Cys-127-Cys-135, Cys-137-Cys-157, Cys-206-Cys-220, Cys-208-Cys-215, Cys-278-Cys-309, Cys-294-Cys-304, Cys-308-Cys-348, Cys-324-Cys-339, Cys-326-Cys-336, and Cys-331-Cys-332. Ser-212 is lipidated: O-palmitoleoyl serine; by PORCN. N-linked (GlcNAc...) asparagine glycosylation occurs at Asn-295.

This sequence belongs to the Wnt family. Post-translationally, palmitoleoylation is required for efficient binding to frizzled receptors. Depalmitoleoylation leads to Wnt signaling pathway inhibition.

The protein localises to the secreted. Its subcellular location is the extracellular space. It localises to the extracellular matrix. Functionally, ligand for members of the frizzled family of seven transmembrane receptors. Functions in the canonical Wnt signaling pathway that results in activation of transcription factors of the TCF/LEF family. Functions as a upstream regulator of FGF10 expression. Plays an important role in embryonic lung development. May contribute to embryonic brain development by regulating the proliferation of dopaminergic precursors and neurons. This chain is Protein Wnt-2 (WNT2), found in Monodelphis domestica (Gray short-tailed opossum).